Consider the following 131-residue polypeptide: Small ribosomal subunit protein uS11 (131 aa).

Belongs to the universal ribosomal protein uS11 family. As to quaternary structure, part of the 30S ribosomal subunit. Interacts with proteins S7 and S18. Binds to IF-3.

Located on the platform of the 30S subunit, it bridges several disparate RNA helices of the 16S rRNA. Forms part of the Shine-Dalgarno cleft in the 70S ribosome. The polypeptide is Small ribosomal subunit protein uS11 (Bacillus licheniformis (strain ATCC 14580 / DSM 13 / JCM 2505 / CCUG 7422 / NBRC 12200 / NCIMB 9375 / NCTC 10341 / NRRL NRS-1264 / Gibson 46)).